The sequence spans 177 residues: Small ribosomal subunit protein uS4 (177 aa).

Positions 104–166 (RRLQTIVYKK…PTSPFKQHPP (63 aa)) constitute an S4 RNA-binding domain. The tract at residues 158-177 (TSPFKQHPPTQQGEENVQQA) is disordered. Residues 165–177 (PPTQQGEENVQQA) are compositionally biased toward polar residues.

Belongs to the universal ribosomal protein uS4 family. As to quaternary structure, part of the 30S ribosomal subunit. Contacts protein S5. The interaction surface between S4 and S5 is involved in control of translational fidelity.

In terms of biological role, one of the primary rRNA binding proteins, it binds directly to 16S rRNA where it nucleates assembly of the body of the 30S subunit. Functionally, with S5 and S12 plays an important role in translational accuracy. This chain is Small ribosomal subunit protein uS4, found in Sulfurisphaera tokodaii (strain DSM 16993 / JCM 10545 / NBRC 100140 / 7) (Sulfolobus tokodaii).